We begin with the raw amino-acid sequence, 451 residues long: Phosphoglucosamine mutase (451 aa).

Ser-104 serves as the catalytic Phosphoserine intermediate. Mg(2+) contacts are provided by Ser-104, Asp-242, Asp-244, and Asp-246. Ser-104 carries the post-translational modification Phosphoserine.

It belongs to the phosphohexose mutase family. The cofactor is Mg(2+). In terms of processing, activated by phosphorylation.

It carries out the reaction alpha-D-glucosamine 1-phosphate = D-glucosamine 6-phosphate. Its function is as follows. Catalyzes the conversion of glucosamine-6-phosphate to glucosamine-1-phosphate. This is Phosphoglucosamine mutase from Kocuria rhizophila (strain ATCC 9341 / DSM 348 / NBRC 103217 / DC2201).